A 368-amino-acid polypeptide reads, in one-letter code: D-alanine--D-alanine ligase (368 aa).

Residues 151–358 (KKLLAAEGLP…YRTLISTLVD (208 aa)) enclose the ATP-grasp domain. 179–234 (KAELGLPVFVKPARGGSSIGITRVSNWDGLDGAIAHARLHDPKVIVEGAIIGREVE) contributes to the ATP binding site. Residues Asp313, Glu325, and Asn327 each coordinate Mg(2+).

The protein belongs to the D-alanine--D-alanine ligase family. Requires Mg(2+) as cofactor. It depends on Mn(2+) as a cofactor.

It localises to the cytoplasm. It catalyses the reaction 2 D-alanine + ATP = D-alanyl-D-alanine + ADP + phosphate + H(+). It participates in cell wall biogenesis; peptidoglycan biosynthesis. Functionally, cell wall formation. This chain is D-alanine--D-alanine ligase, found in Rhodococcus erythropolis (strain PR4 / NBRC 100887).